The sequence spans 2185 residues: DNA polymerase epsilon catalytic subunit A (2185 aa).

Residues cysteine 2072, cysteine 2075, cysteine 2094, and cysteine 2097 each coordinate Zn(2+). The CysA-type zinc finger occupies 2072–2097 (CEHCSYISDIDICRESMERVFICQSC). [4Fe-4S] cluster contacts are provided by cysteine 2128, cysteine 2131, cysteine 2143, and cysteine 2145. The CysB motif motif lies at 2128-2145 (CNKCHKIKEDAMSPYCPC).

This sequence belongs to the DNA polymerase type-B family. Heterotetramer. Consists of 4 subunits: POL2, DPB2, DPB3 and DPB4. [4Fe-4S] cluster serves as cofactor.

It is found in the nucleus. It carries out the reaction DNA(n) + a 2'-deoxyribonucleoside 5'-triphosphate = DNA(n+1) + diphosphate. In terms of biological role, DNA polymerase II participates in chromosomal DNA replication. This is DNA polymerase epsilon catalytic subunit A (POL2) from Kluyveromyces lactis (strain ATCC 8585 / CBS 2359 / DSM 70799 / NBRC 1267 / NRRL Y-1140 / WM37) (Yeast).